A 200-amino-acid polypeptide reads, in one-letter code: LexA repressor (200 aa).

Residues 27-47 constitute a DNA-binding region (H-T-H motif); that stretch reads VREICNAVELRSTSTVHGHLK. Residues S124 and K161 each act as for autocatalytic cleavage activity in the active site.

Belongs to the peptidase S24 family. Homodimer.

The catalysed reaction is Hydrolysis of Ala-|-Gly bond in repressor LexA.. Represses a number of genes involved in the response to DNA damage (SOS response), including recA and lexA. In the presence of single-stranded DNA, RecA interacts with LexA causing an autocatalytic cleavage which disrupts the DNA-binding part of LexA, leading to derepression of the SOS regulon and eventually DNA repair. This chain is LexA repressor, found in Clostridium tetani (strain Massachusetts / E88).